The sequence spans 668 residues: DNA ligase (668 aa).

Residues 34–38 (DAEYD), 83–84 (SL), and E113 each bind NAD(+). K115 serves as the catalytic N6-AMP-lysine intermediate. R136, E170, K286, and K310 together coordinate NAD(+). Residues C404, C407, C422, and C427 each contribute to the Zn(2+) site. The 79-residue stretch at 590-668 (DSDSYFAGKT…EEQLMGELKK (79 aa)) folds into the BRCT domain.

The protein belongs to the NAD-dependent DNA ligase family. LigA subfamily. Requires Mg(2+) as cofactor. Mn(2+) is required as a cofactor.

The catalysed reaction is NAD(+) + (deoxyribonucleotide)n-3'-hydroxyl + 5'-phospho-(deoxyribonucleotide)m = (deoxyribonucleotide)n+m + AMP + beta-nicotinamide D-nucleotide.. Its function is as follows. DNA ligase that catalyzes the formation of phosphodiester linkages between 5'-phosphoryl and 3'-hydroxyl groups in double-stranded DNA using NAD as a coenzyme and as the energy source for the reaction. It is essential for DNA replication and repair of damaged DNA. The protein is DNA ligase of Bacillus subtilis (strain 168).